The primary structure comprises 451 residues: Tubulin gamma-2 chain (451 aa).

Position 131 is a phosphoserine; by BRSK1 (Ser-131). GTP is bound at residue 142 to 148; that stretch reads AGGTGSG.

It belongs to the tubulin family. Component of the gamma-tubulin ring complex (gTuRC) consisting of TUBGCP2, TUBGCP3, TUBGCP4, TUBGCP5 and TUBGCP6 and gamma-tubulin TUBG1 or TUBG2. TUBGCP2, TUBGCP3, TUBGCP4, TUBGCP5 and TUBGCP6 assemble in a 5:5:2:1:1 stoichiometry; each is associated with a gamma-tubulin, thereby arranging 14 gamma-tubulins in a helical manner. Gamma-tubulin at the first position is blocked by TUBGCP3 at the last position, allowing 13 protafilaments to grow into a microtubule. Interacts with alpha-beta tubulin heterodimers; the interaction allows microtubules to nucleate from the gTuRC. In terms of processing, phosphorylation at Ser-131 by BRSK1 regulates centrosome duplication, possibly by mediating relocation of gamma-tubulin and its associated proteins from the cytoplasm to the centrosome.

The protein resides in the cytoplasm. It localises to the cytoskeleton. Its subcellular location is the microtubule organizing center. The protein localises to the centrosome. Tubulin is the major constituent of microtubules, protein filaments consisting of alpha- and beta-tubulin heterodimers. Gamma-tubulin is a key component of the gamma-tubulin ring complex (gTuRC) which mediates microtubule nucleation. The gTuRC regulates the minus-end nucleation of alpha-beta tubulin heterodimers that grow into microtubule protafilaments, a critical step in centrosome duplication and spindle formation. The sequence is that of Tubulin gamma-2 chain (TUBG2) from Homo sapiens (Human).